Consider the following 739-residue polypeptide: Protein NPGR2 (739 aa).

Residues E32–N71 are disordered. The segment covering Q33–E45 has biased composition (basic and acidic residues). Residues N53 to S63 are compositionally biased toward polar residues. TPR repeat units lie at residues E90–T127, F162–S195, T215–L248, P465–S498, L500–W533, G536–Q569, L592–S625, S626–H659, and H697–M733.

Interacts with calmodulin in a calcium-dependent manner. In terms of tissue distribution, expressed in pollen, flowers and fruits.

The sequence is that of Protein NPGR2 from Arabidopsis thaliana (Mouse-ear cress).